The sequence spans 1194 residues: Phosphatidylinositol-3,5-bisphosphate 3-phosphatase MTMR3 (1194 aa).

The residue at position 4 (S4) is a Phosphoserine. The Myotubularin phosphatase domain occupies 151-572 (EHVTSRFKNE…RNLMLWSAVY (422 aa)). The a 1,2-diacyl-sn-glycero-3-phospho-(1D-myo-inositol-3,5-bisphosphate) site is built by N322, N347, and I348. A 1,2-diacyl-sn-glycero-3-phospho-(1D-myo-inositol-3-phosphate) contacts are provided by N322, N347, and I348. The active-site Phosphocysteine intermediate is the C409. Positions 410, 411, 412, 413, 414, 415, 451, and 455 each coordinate a 1,2-diacyl-sn-glycero-3-phospho-(1D-myo-inositol-3,5-bisphosphate). Positions 410, 411, 412, 413, 414, and 415 each coordinate a 1,2-diacyl-sn-glycero-3-phospho-(1D-myo-inositol-3-phosphate). R455 is an a 1,2-diacyl-sn-glycero-3-phospho-(1D-myo-inositol-3-phosphate) binding site. A disordered region spans residues 583–609 (DDSCAPYPAPGTSPDEPPLSRLPKTRS). Residues 589–599 (YPAPGTSPDEP) show a composition bias toward pro residues. S609, S629, S643, and S647 each carry phosphoserine. The span at 693 to 724 (TKEESGVEEPTHREHTEVPEVKEEAPLAKESR) shows a compositional bias: basic and acidic residues. Disordered stretches follow at residues 693-731 (TKEESGVEEPTHREHTEVPEVKEEAPLAKESRTAAQGSG), 852-871 (ESGPQLHHRPCLASSGRFSG), and 876-897 (PIAPEPRSAERPQWDSVLHRTS). T725 bears the Phosphothreonine mark. Position 904 is a phosphoserine (S904). Disordered regions lie at residues 932-971 (NKASEQPAGFDTLQKYPTPNGHCANGETGRSKDSLSHQLS) and 988-1017 (KWLNSHSGRPSTTNSPEQPSRSHLDDDGMP). Positions 991–1006 (NSHSGRPSTTNSPEQP) are enriched in polar residues. A coiled-coil region spans residues 1025–1058 (QRLRQIESGHQQEVETLKKQVQELKSRLESQYLT). S1060 bears the Phosphoserine mark. An FYVE-type zinc finger spans residues 1115–1175 (DHLAAHCYAC…VCKSCYSSLH (61 aa)). Zn(2+) is bound by residues C1121, C1124, C1137, C1140, C1145, C1148, C1167, and C1170.

This sequence belongs to the protein-tyrosine phosphatase family. Non-receptor class myotubularin subfamily. Forms heterodimers with MTMR4 that recruit both CEP55 and PLK1; occurs during early mitosis, regulates the phosphorylation of CEP55 by PLK1 and its recruitment to the midbody where it mediates cell abscission.

The protein resides in the cytoplasm. It is found in the cytosol. The protein localises to the membrane. The catalysed reaction is a 1,2-diacyl-sn-glycero-3-phospho-(1D-myo-inositol-3,5-bisphosphate) + H2O = a 1,2-diacyl-sn-glycero-3-phospho-(1D-myo-inositol-5-phosphate) + phosphate. The enzyme catalyses a 1,2-diacyl-sn-glycero-3-phospho-(1D-myo-inositol-3-phosphate) + H2O = a 1,2-diacyl-sn-glycero-3-phospho-(1D-myo-inositol) + phosphate. It carries out the reaction 1,2-dihexadecanoyl-sn-glycero-3-phospho-(1D-myo-inositol-3-phosphate) + H2O = 1,2-dihexadecanoyl-sn-glycero-3-phospho-(1D-myo-inositol) + phosphate. It catalyses the reaction 1,2-dioctanoyl-sn-glycero-3-phospho-(1-D-myo-inositol-3-phosphate) + H2O = 1,2-dioctanoyl-sn-glycero-3-phospho-(1D-myo-inositol) + phosphate. The catalysed reaction is 1,2-dihexadecanoyl-sn-glycero-3-phospho-(1D-myo-inositol-3,5-phosphate) + H2O = 1,2-dihexadecanoyl-sn-glycero-3-phospho-(1D-myo-inositol-5-phosphate) + phosphate. Lipid phosphatase that specifically dephosphorylates the D-3 position of phosphatidylinositol 3-phosphate and phosphatidylinositol 3,5-bisphosphate, generating phosphatidylinositol and phosphatidylinositol 5-phosphate. Decreases the levels of phosphatidylinositol 3-phosphate, a phospholipid found in cell membranes where it acts as key regulator of both cell signaling and intracellular membrane traffic. Could also have a molecular sequestering/adapter activity and regulate biological processes independently of its phosphatase activity. It includes the regulation of midbody abscission during mitotic cytokinesis. This is Phosphatidylinositol-3,5-bisphosphate 3-phosphatase MTMR3 from Rattus norvegicus (Rat).